The primary structure comprises 100 residues: MGALTKADMAERLYQEVGLNKREAKEMVEAFFDEVRDALSHNEQVKLSGFGNFDLRDKKQRPGRNPKTGEEIPITARRVVTFRPGQKLKAKVEAYAGTQS.

This sequence belongs to the bacterial histone-like protein family. As to quaternary structure, heterodimer of an alpha and a beta chain.

In terms of biological role, this protein is one of the two subunits of integration host factor, a specific DNA-binding protein that functions in genetic recombination as well as in transcriptional and translational control. The protein is Integration host factor subunit alpha of Hahella chejuensis (strain KCTC 2396).